The following is a 270-amino-acid chain: Phospholipase A and acyltransferase 5 (270 aa).

2 disordered regions span residues 1–54 (MGLS…SASS) and 70–122 (RRLE…NPRP). Composition is skewed to polar residues over residues 24–54 (TQISKTSSTESSDTQSATGQSTVPHSDSASS) and 100–116 (IPTSNSEIESTQKNQAV). The LRAT domain maps to 127-240 (LIEIFRIGYE…LRYGVPRSQQ (114 aa)). Residues His137 and His149 contribute to the active site. Cys224 serves as the catalytic Acyl-thioester intermediate.

This sequence belongs to the H-rev107 family. In terms of tissue distribution, isoform 4 shows highest expression level in testis.

The protein localises to the cytoplasm. It is found in the cytosol. The enzyme catalyses a 1,2-diacyl-sn-glycero-3-phosphocholine + H2O = a 1-acyl-sn-glycero-3-phosphocholine + a fatty acid + H(+). It carries out the reaction a 1,2-diacyl-sn-glycero-3-phosphocholine + H2O = a 2-acyl-sn-glycero-3-phosphocholine + a fatty acid + H(+). The catalysed reaction is 1-hexadecanoyl-2-(5Z,8Z,11Z,14Z-eicosatetraenoyl)-sn-glycero-3-phosphocholine + 1,2-di-(9Z-octadecenoyl)-sn-glycero-3-phosphoethanolamine = N-(5Z,8Z,11Z,14Z-eicosatetraenoyl)-1,2-di-(9Z-octadecenoyl)-sn-glycero-3-phosphoethanolamine + 1-hexadecanoyl-sn-glycero-3-phosphocholine + H(+). It catalyses the reaction 1,2-di-(9Z-octadecenoyl)-sn-glycero-3-phosphoethanolamine + 1,2-dihexadecanoyl-sn-glycero-3-phosphocholine = N-hexadecanoyl-1,2-di-(9Z-octadecenoyl)-sn-glycero-3-phosphoethanolamine + 1-hexadecanoyl-sn-glycero-3-phosphocholine + H(+). The enzyme catalyses 1,2-di-(9Z-octadecenoyl)-sn-glycero-3-phosphoethanolamine + 1,2-dihexadecanoyl-sn-glycero-3-phosphocholine = N-hexadecanoyl-1,2-di-(9Z-octadecenoyl)-sn-glycero-3-phosphoethanolamine + 2-hexadecanoyl-sn-glycero-3-phosphocholine + H(+). It carries out the reaction a 1,2-diacyl-sn-glycero-3-phosphoethanolamine + a 1,2-diacyl-sn-glycero-3-phosphocholine = an N-acyl-1,2-diacyl-sn-glycero-3-phosphoethanolamine + a 1-acyl-sn-glycero-3-phosphocholine + H(+). The catalysed reaction is a 1,2-diacyl-sn-glycero-3-phosphoethanolamine + a 1,2-diacyl-sn-glycero-3-phosphocholine = an N-acyl-1,2-diacyl-sn-glycero-3-phosphoethanolamine + a 2-acyl-sn-glycero-3-phosphocholine + H(+). It catalyses the reaction 1-hexadecanoyl-2-(9Z-octadecenoyl)-sn-glycero-3-phosphocholine + 1,2-di-(9Z-octadecenoyl)-sn-glycero-3-phosphoethanolamine = N,1,2-tri-(9Z-octadecenoyl)-sn-glycero-3-phosphoethanolamine + 1-hexadecanoyl-sn-glycero-3-phosphocholine + H(+). Its function is as follows. Exhibits both phospholipase A1/2 and acyltransferase activities. Shows phospholipase A1 (PLA1) and A2 (PLA2) activity, catalyzing the calcium-independent release of fatty acids from the sn-1 or sn-2 position of glycerophospholipids. Shows N-acyltransferase activity, catalyzing the calcium-independent transfer of a fatty acyl group at the sn-1 position of phosphatidylcholine (PC) and other glycerophospholipids to the primary amine of phosphatidylethanolamine (PE), forming N-acylphosphatidylethanolamine (NAPE), which serves as precursor for N-acylethanolamines (NAEs). This chain is Phospholipase A and acyltransferase 5, found in Mus musculus (Mouse).